A 77-amino-acid chain; its full sequence is Large ribosomal subunit protein bL28 (77 aa).

Positions 1–21 (MARVCKVTGKRPMTGNNVSHA) are disordered.

It belongs to the bacterial ribosomal protein bL28 family.

This chain is Large ribosomal subunit protein bL28, found in Chromobacterium violaceum (strain ATCC 12472 / DSM 30191 / JCM 1249 / CCUG 213 / NBRC 12614 / NCIMB 9131 / NCTC 9757 / MK).